We begin with the raw amino-acid sequence, 263 residues long: Tryptophan synthase alpha chain (263 aa).

Residues Glu-49 and Asp-60 each act as proton acceptor in the active site.

The protein belongs to the TrpA family. Tetramer of two alpha and two beta chains.

It catalyses the reaction (1S,2R)-1-C-(indol-3-yl)glycerol 3-phosphate + L-serine = D-glyceraldehyde 3-phosphate + L-tryptophan + H2O. Its pathway is amino-acid biosynthesis; L-tryptophan biosynthesis; L-tryptophan from chorismate: step 5/5. Functionally, the alpha subunit is responsible for the aldol cleavage of indoleglycerol phosphate to indole and glyceraldehyde 3-phosphate. The polypeptide is Tryptophan synthase alpha chain (Cereibacter sphaeroides (strain KD131 / KCTC 12085) (Rhodobacter sphaeroides)).